Consider the following 2208-residue polypeptide: RNA-directed RNA polymerase L (2208 aa).

Residues 26–284 (KDALLSQVHP…LHQDSDTINC (259 aa)) form an endonuclease region. Glu51, Asp89, and Glu102 together coordinate Mn(2+). Residue Lys115 is part of the active site. The RdRp catalytic domain maps to 1171–1367 (CDMKMAVNNG…YLSSKLNKFV (197 aa)). Asp1329 contacts Mg(2+).

The protein belongs to the Bunyavirales RNA polymerase family. As to quaternary structure, homomultimer; the oligomeric structure is essential for the polymerase activity. Interacts with nucleoprotein N. Interacts with protein Z; this interaction inhibits viral transcription and replication, Z partially blocks the product exit tunnel for the releasing nascent RNA product. It depends on Mn(2+) as a cofactor. Mg(2+) is required as a cofactor.

The protein resides in the virion. Its subcellular location is the host cytoplasm. The catalysed reaction is RNA(n) + a ribonucleoside 5'-triphosphate = RNA(n+1) + diphosphate. In terms of biological role, RNA-dependent RNA polymerase, which is responsible for the replication and transcription of the viral RNA genome using antigenomic RNA as an intermediate. During transcription, synthesizes subgenomic RNAs and assures their capping by a cap-snatching mechanism, which involves the endonuclease activity cleaving the host capped pre-mRNAs. These short capped RNAs are then used as primers for viral transcription. The 3'-end of subgenomic mRNAs molecules are heterogeneous and not polyadenylated. The replicase function is to direct synthesis of antigenomic and genomic RNA which are encapsidated and non capped. As a consequence of the use of the same enzyme for both transcription and replication, these mechanisms need to be well coordinated. These processes may be regulated by proteins N and Z in a dose-dependent manner. Z protein inhibits the viral polymerase L und thus the viral transcription and RNA synthesis. In Homo sapiens (Human), this protein is RNA-directed RNA polymerase L.